A 1088-amino-acid polypeptide reads, in one-letter code: RNA-directed RNA polymerase (1088 aa).

One can recognise a RdRp catalytic domain in the interval 501–687; sequence LSYGDVTRFL…AKRYIAGGKI (187 aa).

This sequence belongs to the reoviridae RNA-directed RNA polymerase family. In terms of assembly, interacts with VP3 (Potential). Interacts with VP2; this interaction activates VP1. Interacts with NSP5; this interaction is probably necessary for the formation of functional virus factories. Interacts with NSP2; this interaction is weak. Requires Mg(2+) as cofactor.

The protein localises to the virion. The enzyme catalyses RNA(n) + a ribonucleoside 5'-triphosphate = RNA(n+1) + diphosphate. Its function is as follows. RNA-directed RNA polymerase that is involved in both transcription and genome replication. Together with VP3 capping enzyme, forms an enzyme complex positioned near the channels situated at each of the five-fold vertices of the core. Following infection, the outermost layer of the virus is lost, leaving a double-layered particle (DLP) made up of the core and VP6 shell. VP1 then catalyzes the transcription of fully conservative plus-strand genomic RNAs that are extruded through the DLP's channels into the cytoplasm where they function as mRNAs for translation of viral proteins. One copy of each of the viral (+)RNAs is also recruited during core assembly, together with newly synthesized polymerase complexes and VP2. The polymerase of these novo-formed particles catalyzes the synthesis of complementary minus-strands leading to dsRNA formation. To do so, the polymerase specifically recognizes and binds 4 bases 5'-UGUG-3' in the conserved 3'-sequence of plus-strand RNA templates. VP2 presumably activates the autoinhibited VP1-RNA complex to coordinate packaging and genome replication. Once dsRNA synthesis is complete, the polymerase switches to the transcriptional mode, thus providing secondary transcription. The chain is RNA-directed RNA polymerase from Homo sapiens (Human).